Reading from the N-terminus, the 190-residue chain is Glutamyl-tRNA(Gln) amidotransferase subunit F, mitochondrial (190 aa).

The protein belongs to the GatF family. As to quaternary structure, subunit of the heterotrimeric GatFAB amidotransferase (AdT) complex, composed of A, B and F subunits.

The protein resides in the mitochondrion inner membrane. The catalysed reaction is L-glutamyl-tRNA(Gln) + L-glutamine + ATP + H2O = L-glutaminyl-tRNA(Gln) + L-glutamate + ADP + phosphate + H(+). Functionally, allows the formation of correctly charged Gln-tRNA(Gln) through the transamidation of misacylated Glu-tRNA(Gln) in the mitochondria. The reaction takes place in the presence of glutamine and ATP through an activated gamma-phospho-Glu-tRNA(Gln). Required for proper protein synthesis within the mitochondrion. The polypeptide is Glutamyl-tRNA(Gln) amidotransferase subunit F, mitochondrial (Eremothecium gossypii (strain ATCC 10895 / CBS 109.51 / FGSC 9923 / NRRL Y-1056) (Yeast)).